We begin with the raw amino-acid sequence, 160 residues long: Monooxygenase AacuO (160 aa).

The protein belongs to the avfA family.

The protein operates within secondary metabolite biosynthesis. Its function is as follows. Monooxygenase; part of the gene cluster that mediates the biosynthesis of the tetrahydroxanthone dimer secalonic acid D. The pathway begins with the synthesis of atrochrysone thioester by the polyketide synthase AacuL. The atrochrysone carboxyl ACP thioesterase AacuM then breaks the thioester bond and releases the atrochrysone carboxylic acid from AacuL. Atrochrysone carboxylic acid is decarboxylated by the decarboxylase AacuI, and oxidized by the anthrone oxygenase AacuG to yield emodin. Emodin is then reduced to emodin hydroquinone by a yet unidentified oxidoreductase. A-ring reduction by the short chain dehydrogenase AacuN, dehydration by the scytalone dehydratase-like protein AacuK and probable spontaneous re-oxidation, results in overall deoxygenation to chrysophanol. Baeyer-Villiger oxidation by the Baeyer-Villiger monooxygenase (BVMO) AacuH then yields monodictyphenone. Monodictyphenone is transformed into compounds with the tetrahydroxanthone skeleton via methylesterification by the methyltransferase AacuQ, followed by the action of the flavin-dependent monooxygenase AacuC, the isomerase AacuP, and the short chain dehydrogenase/reductase AacuF or AacuD. AacuF and AacuD should accept the same compound as a substrate but perform the ketoreduction with a different stereoselectivity, thus yielding blennolides B and A, respectively. In the final step of the biosynthesis, the cytochrome P450 monooxygenase AacuE accepts blennolide B and/or blennolide A to conduct the dimerization reaction to furnish the tetrahydroxanthone dimers, secalonic acids D, B, and F. This chain is Monooxygenase AacuO, found in Aspergillus aculeatus (strain ATCC 16872 / CBS 172.66 / WB 5094).